The chain runs to 664 residues: MKRRNADCSKLRRPLKRNRITEGIYGSTFLYLKFLVVWALVLLADFVLEFRFEYLWPFWLFIRSVYDSFRYQGLAFSVFFVCVAFTSNIICLLFIPIQWLFFAASTYVWVQYVWHTERGVCLPTVSLWILFVYIEAAIRFKDLKNFHVDLCRPFAAHCIGYPVVTLGFGFKSYVSYKMRLRKQKEVQKENEFYMQLLQQALPPEQQMLQKQEKEAEEAAKGLPDMDSSILIHHNGGIPANKKLSTTLPEIEYREKGKEKDKDAKKHNLGINNNNILQPVDSKIQEIEYMENHINSKRLNNDLVGSTENLLKEDSCTASSKNYKNASGVVNSSPRSHSATNGSIPSSSSKNEKKQKCTSKGPSAHKDLMENCIPNNQLSKPDALVRLEQDIKKLKADLQASRQVEQELRSQISALSSTERGIRSEMGQLRQENELLQNKLHNAVQMKQKDKQNISQLEKKLKAEQEARSFVEKQLMEEKKRKKLEEATAARAVAFAAASRGECTETLRSRIRELEAEGKKLTMDMKVKEEQIRELELKVQELRKYKENEKDTEVLMSALSAMQDKTQHLENSLSAETRIKLDLFSALGDAKRQLEIAQGQILQKDQEIKDLKQKIAEVMAVMPSITYSAATSPLSPVSPHYSSKFVETSPSGLDPNASVYQPLKK.

4 consecutive transmembrane segments (helical) span residues 28-48 (TFLY…DFVL), 75-95 (AFSV…LLFI), 120-140 (VCLP…AIRF), and 154-174 (FAAH…KSYV). Residues 253–265 (REKGKEKDKDAKK) are compositionally biased toward basic and acidic residues. Residues 253–274 (REKGKEKDKDAKKHNLGINNNN) form a disordered region. At serine 305 the chain carries Phosphoserine. The span at 320 to 348 (KNYKNASGVVNSSPRSHSATNGSIPSSSS) shows a compositional bias: polar residues. Residues 320–375 (KNYKNASGVVNSSPRSHSATNGSIPSSSSKNEKKQKCTSKGPSAHKDLMENCIPNN) form a disordered region. A glycan (N-linked (GlcNAc...) asparagine) is linked at asparagine 324. Serine 332 carries the phosphoserine modification. Asparagine 340 and asparagine 452 each carry an N-linked (GlcNAc...) asparagine glycan. The tract at residues 630–664 (TSPLSPVSPHYSSKFVETSPSGLDPNASVYQPLKK) is disordered. Phosphoserine is present on residues serine 631 and serine 634. A glycan (N-linked (GlcNAc...) asparagine) is linked at asparagine 655.

Belongs to the macoilin family. In terms of tissue distribution, strong expression in whole nervous system up to 12.5 dpc. Highly expressed in all neuronal differentiation fields from 14.5 dpc to birth, with highest expression in the telencephalic cortical plate and mitral cells in the olfactory bulb, and lower expression in neuronal progenitor zones. Progressively decreased expression in fields of neuron precursor proliferation from 14.5 dpc and virtually undetectable there by 17.5 dpc. No significant expression detected outside the nervous system. After birth, significant expression remains in the cerebellum, olfactory bulb and hippocampus.

Its subcellular location is the rough endoplasmic reticulum membrane. The protein localises to the nucleus membrane. Plays a role in the regulation of neuronal activity. The protein is Macoilin (Maco1) of Mus musculus (Mouse).